The following is a 219-amino-acid chain: Thiamine-phosphate synthase (219 aa).

Residues 44 to 48 (QLREK) and Asn79 each bind 4-amino-2-methyl-5-(diphosphooxymethyl)pyrimidine. Mg(2+)-binding residues include Asp80 and Asp99. Ser117 is a binding site for 4-amino-2-methyl-5-(diphosphooxymethyl)pyrimidine. 143 to 145 (TST) lines the 2-[(2R,5Z)-2-carboxy-4-methylthiazol-5(2H)-ylidene]ethyl phosphate pocket. Residue Lys146 coordinates 4-amino-2-methyl-5-(diphosphooxymethyl)pyrimidine. 2-[(2R,5Z)-2-carboxy-4-methylthiazol-5(2H)-ylidene]ethyl phosphate-binding positions include Gly175 and 195-196 (IS).

The protein belongs to the thiamine-phosphate synthase family. The cofactor is Mg(2+).

The enzyme catalyses 2-[(2R,5Z)-2-carboxy-4-methylthiazol-5(2H)-ylidene]ethyl phosphate + 4-amino-2-methyl-5-(diphosphooxymethyl)pyrimidine + 2 H(+) = thiamine phosphate + CO2 + diphosphate. It carries out the reaction 2-(2-carboxy-4-methylthiazol-5-yl)ethyl phosphate + 4-amino-2-methyl-5-(diphosphooxymethyl)pyrimidine + 2 H(+) = thiamine phosphate + CO2 + diphosphate. It catalyses the reaction 4-methyl-5-(2-phosphooxyethyl)-thiazole + 4-amino-2-methyl-5-(diphosphooxymethyl)pyrimidine + H(+) = thiamine phosphate + diphosphate. The protein operates within cofactor biosynthesis; thiamine diphosphate biosynthesis; thiamine phosphate from 4-amino-2-methyl-5-diphosphomethylpyrimidine and 4-methyl-5-(2-phosphoethyl)-thiazole: step 1/1. In terms of biological role, condenses 4-methyl-5-(beta-hydroxyethyl)thiazole monophosphate (THZ-P) and 2-methyl-4-amino-5-hydroxymethyl pyrimidine pyrophosphate (HMP-PP) to form thiamine monophosphate (TMP). This Bacillus mycoides (strain KBAB4) (Bacillus weihenstephanensis) protein is Thiamine-phosphate synthase.